Here is a 153-residue protein sequence, read N- to C-terminus: Prostaglandin E synthase (153 aa).

Over Met-1–Val-13 the chain is Lumenal. The helical transmembrane segment at Leu-14–Lys-42 threads the bilayer. Residue Arg-39 participates in glutathione binding. Residues Lys-43–Arg-61 lie on the Cytoplasmic side of the membrane. Residues Ser-62–Ser-91 form a helical membrane-spanning segment. Arg-74 to Glu-78 contributes to the glutathione binding site. Over Phe-92 to Leu-98 the chain is Lumenal. A helical membrane pass occupies residues Ile-99–Gly-120. Residues His-114 and Tyr-118 each contribute to the glutathione site. Topologically, residues Lys-121–Pro-124 are cytoplasmic. A helical transmembrane segment spans residues Arg-125–Leu-153. Arg-127–Tyr-131 lines the glutathione pocket.

Belongs to the MAPEG family. The cofactor is glutathione.

Its subcellular location is the membrane. It is found in the cytoplasm. The protein resides in the perinuclear region. It carries out the reaction prostaglandin H2 = prostaglandin E2. The enzyme catalyses 2-glyceryl-prostaglandin H2 = 2-glyceryl-prostaglandin E2. It catalyses the reaction prostaglandin G2 = (15S)-15-hydroperoxy-prostaglandin E2. The catalysed reaction is 1-chloro-2,4-dinitrobenzene + glutathione = 2,4-dinitrophenyl-S-glutathione + chloride + H(+). It carries out the reaction (5S)-hydroperoxy-(6E,8Z,11Z,14Z)-eicosatetraenoate + 2 glutathione = (5S)-hydroxy-(6E,8Z,11Z,14Z)-eicosatetraenoate + glutathione disulfide + H2O. It functions in the pathway lipid metabolism; prostaglandin biosynthesis. With respect to regulation, activity is increased following LPS stimulation and down-regulated by the anti-inflammatory glucocorticoid dexamethasone. Its function is as follows. Terminal enzyme of the cyclooxygenase (COX)-2-mediated prostaglandin E2 (PGE2) biosynthetic pathway. Catalyzes the glutathione-dependent oxidoreduction of prostaglandin endoperoxide H2 (PGH2) to prostaglandin E2 (PGE2) in response to inflammatory stimuli. Plays a key role in inflammation response, fever and pain. Also catalyzes the oxidoreduction of endocannabinoids into prostaglandin glycerol esters and PGG2 into 15-hydroperoxy-PGE2. In addition, displays low glutathione transferase and glutathione-dependent peroxidase activities, toward 1-chloro-2,4-dinitrobenzene and 5-hydroperoxyicosatetraenoic acid (5-HPETE), respectively. The protein is Prostaglandin E synthase (Ptges) of Rattus norvegicus (Rat).